Reading from the N-terminus, the 258-residue chain is MLVVVSPAKTLDYESPLATERFSQPEFVEHSAELIEVCRKLTPADVSALMKVSDKIAGLNVARFEQWSETFTQENARQAILAFKGDVYTGLDAETLSDDDFDYAQNHLRMLSGLYGLLKPLDLMQPYRLEMGTRLANERGTNLYQFWGNIITDKLNEALNAQGDNVLINLASNEYFKAVKPKSLDGQIITPVFKDCKNGQYKVISFYAKKARGMMARYIIENKIDSVEALTRFDTAGYYFVEEESNAKELVFKREEQN.

It belongs to the UPF0246 family.

The protein is UPF0246 protein VS_0505 of Vibrio atlanticus (strain LGP32) (Vibrio splendidus (strain Mel32)).